Reading from the N-terminus, the 512-residue chain is FACT complex subunit pob3 (512 aa).

The segment covering Leu460–Gly504 has biased composition (acidic residues). A disordered region spans residues Leu460–Glu512.

This sequence belongs to the SSRP1 family. In terms of assembly, forms a stable heterodimer with spt16. The spt16-pob3 dimer weakly associates with multiple molecules of nhp6 to form the FACT complex. Interacts with abo1.

The protein localises to the nucleus. The protein resides in the chromosome. In terms of biological role, component of the FACT complex, a general chromatin factor that acts to reorganize nucleosomes. The FACT complex is involved in multiple processes that require DNA as a template such as mRNA elongation, DNA replication and DNA repair. During transcription elongation the FACT complex acts as a histone chaperone that both destabilizes and restores nucleosomal structure. It facilitates the passage of RNA polymerase II and transcription by promoting the dissociation of one histone H2A-H2B dimer from the nucleosome, then subsequently promotes the reestablishment of the nucleosome following the passage of RNA polymerase II. The chain is FACT complex subunit pob3 from Schizosaccharomyces pombe (strain 972 / ATCC 24843) (Fission yeast).